A 191-amino-acid polypeptide reads, in one-letter code: MDDLLEELTADIDANAAISFAVTDLESVIESDGASDHADQPPDEGATQRYTDTPLTDDAVATMDGWLDNDQLHTISDAIVTEHIDEILLLLITVRDGACGKELLQDLRRLFGADLSPGTVYPHLNDLAVEGVLEVQKLSKRKVYRLSDPEGAFTRIDHMVDQLLLFSLVLKAVMTDCKARQSQSQGRETND.

The interval 31-51 (SDGASDHADQPPDEGATQRYT) is disordered. DNA is bound at residue 140–145 (KRKVYR). The leucine-zipper stretch occupies residues 150 to 181 (EGAFTRIDHMVDQLLLFSLVLKAVMTDCKARQ).

As to quaternary structure, interacts with GvpD.

The protein resides in the cytoplasm. The amount of protein that accumulates is controlled by GvpD; GvpD causes a reduction in the amount of GvpE, preventing accumulation of excessive amounts of gas vesicles. Functionally, plays a regulatory role in gas vesicle synthesis, activates transcription of the gvpA operon, and probably of the gvpD operon. Gas vesicles are hollow, gas filled proteinaceous nanostructures found in several microbial planktonic microorganisms. They allow positioning of halobacteria at the optimal depth for growth in the poorly aerated, shallow brine pools of their habitat. Expression of a 9.5 kb p-vac DNA fragment containing 2 divergently transcribed regions (gvpD-gvpE-gvpF-gvpG-gvpH-gvpI-gvpJ-gvpK-gvpL-gvpM and gvpA-gvpC-gvpN-gvpO) allows H.volcanii to produce gas vesicles. A similar region restores gas vesicle production in H.halobium without the p-vac locus, but it still has the c-vac locus. This is Transcriptional activator GvpE1 (gvpE11) from Halobacterium salinarum (strain ATCC 700922 / JCM 11081 / NRC-1) (Halobacterium halobium).